The sequence spans 449 residues: UDP-glycosyltransferase 74F2 (449 aa).

UDP-alpha-D-glucose is bound by residues Ser273, 325–327 (SPQ), 342–350 (HCGWNSTME), and 364–367 (WTDQ).

Belongs to the UDP-glycosyltransferase family. In terms of tissue distribution, expressed in seedlings.

Glycosyltransferase that glucosylates benzoic acid and derivatives. Substrate preference is benzoic acid &gt; salicylic acid (SA) &gt; 3-hydroxybenzoic acid &gt; 4-hydroxybenzoic acid. Catalyzes the formation of both SA 2-O-beta-D-glucoside (SAG) and SA glucose ester (SGE). Has high affinity for the tryptophan precursor anthranilate. Catalyzes the formation of anthranilate glucose ester. Is the major source of this activity in the plant. The protein is UDP-glycosyltransferase 74F2 (UGT74F2) of Arabidopsis thaliana (Mouse-ear cress).